The sequence spans 176 residues: Salivary antigen 1 (176 aa).

The first 18 residues, M1–G18, serve as a signal peptide directing secretion.

The protein resides in the secreted. In Ctenocephalides felis (Cat flea), this protein is Salivary antigen 1.